The chain runs to 180 residues: ATP synthase subunit delta (180 aa).

The protein belongs to the ATPase delta chain family. In terms of assembly, F-type ATPases have 2 components, F(1) - the catalytic core - and F(0) - the membrane proton channel. F(1) has five subunits: alpha(3), beta(3), gamma(1), delta(1), epsilon(1). CF(0) has four main subunits: a(1), b(1), b'(1) and c(10-14). The alpha and beta chains form an alternating ring which encloses part of the gamma chain. F(1) is attached to F(0) by a central stalk formed by the gamma and epsilon chains, while a peripheral stalk is formed by the delta, b and b' chains.

The protein localises to the cellular thylakoid membrane. Functionally, f(1)F(0) ATP synthase produces ATP from ADP in the presence of a proton or sodium gradient. F-type ATPases consist of two structural domains, F(1) containing the extramembraneous catalytic core and F(0) containing the membrane proton channel, linked together by a central stalk and a peripheral stalk. During catalysis, ATP synthesis in the catalytic domain of F(1) is coupled via a rotary mechanism of the central stalk subunits to proton translocation. In terms of biological role, this protein is part of the stalk that links CF(0) to CF(1). It either transmits conformational changes from CF(0) to CF(1) or is implicated in proton conduction. The polypeptide is ATP synthase subunit delta (Prochlorococcus marinus subsp. pastoris (strain CCMP1986 / NIES-2087 / MED4)).